The chain runs to 102 residues: Small ribosomal subunit protein uS10 (102 aa).

This sequence belongs to the universal ribosomal protein uS10 family. In terms of assembly, part of the 30S ribosomal subunit.

Functionally, involved in the binding of tRNA to the ribosomes. The chain is Small ribosomal subunit protein uS10 from Kosmotoga olearia (strain ATCC BAA-1733 / DSM 21960 / TBF 19.5.1).